Here is a 691-residue protein sequence, read N- to C-terminus: Methionine--tRNA ligase (691 aa).

The 'HIGH' region signature appears at P15–H25. 4 residues coordinate Zn(2+): C147, C150, C160, and C163. Residues K336–S340 carry the 'KMSKS' region motif. T339 is an ATP binding site. The tRNA-binding domain maps to D589–N691.

The protein belongs to the class-I aminoacyl-tRNA synthetase family. MetG type 1 subfamily. Homodimer. Zn(2+) serves as cofactor.

The protein resides in the cytoplasm. The enzyme catalyses tRNA(Met) + L-methionine + ATP = L-methionyl-tRNA(Met) + AMP + diphosphate. In terms of biological role, is required not only for elongation of protein synthesis but also for the initiation of all mRNA translation through initiator tRNA(fMet) aminoacylation. The polypeptide is Methionine--tRNA ligase (Christiangramia forsetii (strain DSM 17595 / CGMCC 1.15422 / KT0803) (Gramella forsetii)).